Here is a 119-residue protein sequence, read N- to C-terminus: Holo-[acyl-carrier-protein] synthase (119 aa).

Asp-8 and Glu-58 together coordinate Mg(2+).

This sequence belongs to the P-Pant transferase superfamily. AcpS family. It depends on Mg(2+) as a cofactor.

It localises to the cytoplasm. The catalysed reaction is apo-[ACP] + CoA = holo-[ACP] + adenosine 3',5'-bisphosphate + H(+). Transfers the 4'-phosphopantetheine moiety from coenzyme A to a Ser of acyl-carrier-protein. The protein is Holo-[acyl-carrier-protein] synthase of Streptococcus mutans serotype c (strain ATCC 700610 / UA159).